A 982-amino-acid polypeptide reads, in one-letter code: Cell division cycle-associated protein 2 (982 aa).

A compositionally biased stretch (polar residues) spans 75-87; sequence VKTSSGKSTSSLQ. The interval 75–97 is disordered; it reads VKTSSGKSTSSLQKARRRSTVGV. 3 positions are modified to phosphoserine: Ser-100, Ser-122, and Ser-133. 2 disordered regions span residues 192-216 and 274-315; these read SGFP…NYLS and TPLS…CGSS. Polar residues-rich tracts occupy residues 207-216 and 275-315; these read SQDSPDNYLS and PLSS…CGSS. A phosphoserine mark is found at Ser-286, Ser-296, and Ser-306. Phosphothreonine is present on Thr-309. A PP1-binding domain is found at 379 to 436; the sequence is KRKRVTFGEDLSPEVFDESLPANTPLCKGGTPVRPRTVKTTSPLQSPVHEQFLQPNFD. 2 positions are modified to phosphoserine: Ser-390 and Ser-397. Disordered regions lie at residues 400–473, 489–545, 568–638, and 651–716; these read ANTP…NTCS, TRTS…KSYR, KPLL…QSQV, and ASER…PQSQ. Thr-402 carries the phosphothreonine modification. Phosphoserine is present on Ser-424. Composition is skewed to polar residues over residues 451-473 and 498-512; these read SFAN…NTCS and TLSS…TTQA. The segment covering 518–545 has biased composition (basic residues); that stretch reads KMSRRKSREKKHTSAALPKKKQVLKSYR. Phosphoserine is present on residues Ser-572 and Ser-595. Residues 651-668 are compositionally biased toward polar residues; the sequence is ASERGPNASTRDTGSEGN. The span at 669-685 shows a compositional bias: basic and acidic residues; sequence TRAESKCQSAKEPKPGT. A Phosphoserine modification is found at Ser-735. A Glycyl lysine isopeptide (Lys-Gly) (interchain with G-Cter in SUMO2) cross-link involves residue Lys-741. Residues 910–982 form a disordered region; that stretch reads ECPSSKEETI…SLKGESAQLP (73 aa). A Phosphoserine modification is found at Ser-913. Over residues 931–942 the composition is skewed to low complexity; that stretch reads VSGSESQGVGSS. Ser-950 carries the post-translational modification Phosphoserine. Polar residues predominate over residues 952–964; the sequence is CGSTLTDANSATQ. Ser-973 carries the phosphoserine modification.

As to quaternary structure, interacts with PPP1CC. In terms of processing, phosphorylated by CDK1. May regulate its subcellular location.

It is found in the nucleus. Regulator of chromosome structure during mitosis required for condensin-depleted chromosomes to retain their compact architecture through anaphase. Acts by mediating the recruitment of phopsphatase PP1-gamma subunit (PPP1CC) to chromatin at anaphase and into the following interphase. At anaphase onset, its association with chromatin targets a pool of PPP1CC to dephosphorylate substrates. This Mus musculus (Mouse) protein is Cell division cycle-associated protein 2 (Cdca2).